The primary structure comprises 51 residues: SPbeta prophage-derived uncharacterized protein YorQ (51 aa).

This chain is SPbeta prophage-derived uncharacterized protein YorQ (yorQ), found in Bacillus subtilis (strain 168).